The sequence spans 326 residues: Organic solute transporter subunit alpha (326 aa).

The Extracellular portion of the chain corresponds to 1–28 (METSNFTLFDPRCRAEAPFAIDAIKQLD). Residue Asn-5 is glycosylated (N-linked (GlcNAc...) asparagine). Residues 29–49 (IFGKVLYTVLTLMATASMLVF) form a helical membrane-spanning segment. Residues 50–67 (IEECIYIYKKVPAHKKST) lie on the Cytoplasmic side of the membrane. Residues 68–88 (IIWVTGVAPVMAIMSCLGMWV) form a helical membrane-spanning segment. Residues 89 to 99 (PRATMFTDMTS) are Extracellular-facing. Residues 100–120 (ATYFAIVVFKFLILMIEEVGG) traverse the membrane as a helical segment. Over 121-161 (DNAFLRRCEKQTFKISTGPCCCCCPCLPNVPITRRSLFILK) the chain is Cytoplasmic. The helical transmembrane segment at 162–182 (LGSYQFALMKLVLTIFSIVLW) threads the bilayer. At 183 to 198 (TNGSFSLTNVSASGAA) the chain is on the extracellular side. N-linked (GlcNAc...) asparagine glycans are attached at residues Asn-184 and Asn-191. A helical membrane pass occupies residues 199 to 219 (IWINSFIGVLTIIALWPVAIM). Topologically, residues 220-237 (FMHVREALRTLKIVPKYA) are cytoplasmic. A helical membrane pass occupies residues 238–258 (MYQLVLILSQLQTAIINILAL). A glycan (N-linked (GlcNAc...) asparagine) is linked at Asn-259. The Extracellular segment spans residues 259–275 (NGTIACSPPYSSQARGY). Residues 276–296 (MMSQQLLIVEMFIITLVTRVL) form a helical membrane-spanning segment. The Cytoplasmic portion of the chain corresponds to 297-326 (YRRQYEPIPEPDDVEEKKTVLSSKKAIDVA).

It belongs to the OST-alpha family. As to quaternary structure, interacts with slc51b. The Ost-alpha/Ost-beta complex is a heterodimer composed of alpha (slc51a) and beta (slc51b) subunit.

Its subcellular location is the cell membrane. It is found in the endoplasmic reticulum membrane. The enzyme catalyses taurocholate(out) = taurocholate(in). It catalyses the reaction prostaglandin E2(out) = prostaglandin E2(in). It carries out the reaction estrone 3-sulfate(out) = estrone 3-sulfate(in). The catalysed reaction is dehydroepiandrosterone 3-sulfate(out) = dehydroepiandrosterone 3-sulfate(in). The enzyme catalyses tauroursodeoxycholate(out) = tauroursodeoxycholate(in). It catalyses the reaction glycoursodeoxycholate(out) = glycoursodeoxycholate(in). It carries out the reaction glycocholate(out) = glycocholate(in). The catalysed reaction is taurochenodeoxycholate(out) = taurochenodeoxycholate(in). The enzyme catalyses glycochenodeoxycholate(out) = glycochenodeoxycholate(in). It catalyses the reaction taurodeoxycholate(out) = taurodeoxycholate(in). It carries out the reaction glycodeoxycholate(out) = glycodeoxycholate(in). In terms of biological role, essential component of the Ost-alpha/Ost-beta complex, a heterodimer that acts as the intestinal basolateral transporter responsible for the translocation of bile acids (such as taurocholate), steroids (such as estrone sulfate), and eicosanoids (such as prostaglandin E2). The polypeptide is Organic solute transporter subunit alpha (slc51a) (Danio rerio (Zebrafish)).